A 436-amino-acid polypeptide reads, in one-letter code: 3-ketoacyl-CoA thiolase (436 aa).

C99 serves as the catalytic Acyl-thioester intermediate. Catalysis depends on proton acceptor residues H392 and C422.

The protein belongs to the thiolase-like superfamily. Thiolase family. As to quaternary structure, heterotetramer of two alpha chains (FadJ) and two beta chains (FadI).

The protein resides in the cytoplasm. The enzyme catalyses an acyl-CoA + acetyl-CoA = a 3-oxoacyl-CoA + CoA. Its pathway is lipid metabolism; fatty acid beta-oxidation. Catalyzes the final step of fatty acid oxidation in which acetyl-CoA is released and the CoA ester of a fatty acid two carbons shorter is formed. The polypeptide is 3-ketoacyl-CoA thiolase (Pseudoalteromonas atlantica (strain T6c / ATCC BAA-1087)).